The chain runs to 361 residues: Phosphate acyltransferase (361 aa).

This sequence belongs to the PlsX family. In terms of assembly, homodimer. Probably interacts with PlsY.

It is found in the cytoplasm. It carries out the reaction a fatty acyl-[ACP] + phosphate = an acyl phosphate + holo-[ACP]. The protein operates within lipid metabolism; phospholipid metabolism. Catalyzes the reversible formation of acyl-phosphate (acyl-PO(4)) from acyl-[acyl-carrier-protein] (acyl-ACP). This enzyme utilizes acyl-ACP as fatty acyl donor, but not acyl-CoA. The polypeptide is Phosphate acyltransferase (Anaeromyxobacter dehalogenans (strain 2CP-C)).